The following is a 513-amino-acid chain: MQLNSTEISELIKKRIAQFDVVSEARNTGTIVSVSDGIIRIHGLSDVMQGEMIALPGNRYAMALNLERDSVGAVVMGPYADLAEGMEVQCTGRILEVPVGRGLLGRVVNTLGQPIDGKGEIDNDGFSPVEVIAPGVIDRRSVDQPVQTGYKAVDSMVPIGRGQRELIIGDRQTGKTALAIDAIINQRNSGIKCIYVAIGQKASTIANVVRKLEEHGALANTIVVAASASESAALQYLAPYAGCAMGEYFRDRGEDALIVYDDLSKQAVAYRQISLLLRRPPGREAYPGDVFYLHSRLLERASRVNEDYVEKFTKGEVKGKTGSLTALPIIETQAGDVSAFVPTNVISITDGQIFLESNLFNSGIRPAVNPGISVSRVGGSAQTKVIKKLAGGIRTALAQYRELAAFAQFASDLDDATRKQLSHGEKVTELLKQKQFAPLSVAEQAVILFAVEFGYLDDVELSKIASFETALLDYSNRNHAEFMQELNKTGNYNDEIKDTLKSILDGFKANSAW.

169–176 (GDRQTGKT) provides a ligand contact to ATP.

Belongs to the ATPase alpha/beta chains family. F-type ATPases have 2 components, CF(1) - the catalytic core - and CF(0) - the membrane proton channel. CF(1) has five subunits: alpha(3), beta(3), gamma(1), delta(1), epsilon(1). CF(0) has three main subunits: a(1), b(2) and c(9-12). The alpha and beta chains form an alternating ring which encloses part of the gamma chain. CF(1) is attached to CF(0) by a central stalk formed by the gamma and epsilon chains, while a peripheral stalk is formed by the delta and b chains.

The protein localises to the cell inner membrane. The enzyme catalyses ATP + H2O + 4 H(+)(in) = ADP + phosphate + 5 H(+)(out). Functionally, produces ATP from ADP in the presence of a proton gradient across the membrane. The alpha chain is a regulatory subunit. In Haemophilus influenzae (strain PittGG), this protein is ATP synthase subunit alpha.